Reading from the N-terminus, the 120-residue chain is Cell division protein FtsL (120 aa).

The Cytoplasmic segment spans residues 1–36 (MTNLAVKYKQQAQEEVQIQTPPQQMAKPKVKAKITR). Residues 37–57 (IEKLLYVAFIGFLLYACVAFI) traverse the membrane as a helical segment. Residues 58–120 (GNKAGLYQVN…INANNVKGLK (63 aa)) are Extracellular-facing.

It belongs to the FtsL family.

The protein resides in the cell membrane. In terms of biological role, essential cell division protein. This chain is Cell division protein FtsL, found in Bacillus cereus (strain ATCC 14579 / DSM 31 / CCUG 7414 / JCM 2152 / NBRC 15305 / NCIMB 9373 / NCTC 2599 / NRRL B-3711).